The following is a 274-amino-acid chain: Phosphatidylglycerol--prolipoprotein diacylglyceryl transferase (274 aa).

Transmembrane regions (helical) follow at residues 16–36 (VGLHLSWYGIFFSLGIFLSSF), 62–82 (FALGALLVIVIGARAFYVLFY), 94–114 (IIKIWKGGLSSHGAIIALVIW), and 129–149 (LSVTYICDICGAVFGVAALLI). R150 is a binding site for a 1,2-diacyl-sn-glycero-3-phospho-(1'-sn-glycerol). The next 3 helical transmembrane spans lie at 184 to 204 (VQLYEGVSYLLLSLVLYWLCY), 213 to 233 (GYSAAGALIGVASIRFCAEFF), and 247 to 267 (LTIGQWLSIPMVFLGIGILWI).

This sequence belongs to the Lgt family.

It localises to the cell inner membrane. The enzyme catalyses L-cysteinyl-[prolipoprotein] + a 1,2-diacyl-sn-glycero-3-phospho-(1'-sn-glycerol) = an S-1,2-diacyl-sn-glyceryl-L-cysteinyl-[prolipoprotein] + sn-glycerol 1-phosphate + H(+). Its pathway is protein modification; lipoprotein biosynthesis (diacylglyceryl transfer). Functionally, catalyzes the transfer of the diacylglyceryl group from phosphatidylglycerol to the sulfhydryl group of the N-terminal cysteine of a prolipoprotein, the first step in the formation of mature lipoproteins. This chain is Phosphatidylglycerol--prolipoprotein diacylglyceryl transferase, found in Chlamydia muridarum (strain MoPn / Nigg).